The sequence spans 424 residues: 3-ketoacyl-CoA thiolase B, peroxisomal (424 aa).

The N-terminal 26 residues, 1 to 26, are a transit peptide targeting the peroxisome; sequence MHRLQVVLGHLAGRPESSSALQAAPC. Positions 1 to 26 are PTS2-type peroxisomal targeting signal; that stretch reads MHRLQVVLGHLAGRPESSSALQAAPC. Residue cysteine 123 is the Acyl-thioester intermediate of the active site. Residues lysine 173 and lysine 234 each carry the N6-acetyllysine modification. CoA-binding residues include arginine 249, threonine 252, and serine 276. Cysteine 408 serves as the catalytic Proton donor/acceptor.

Belongs to the thiolase-like superfamily. Thiolase family. As to quaternary structure, homodimer. Interacts (via PTS2-type peroxisomal targeting signal region) with PEX7; leading to its translocation into peroxisomes. As to expression, mainly expressed in liver; weaker levels in kidney, intestine and white adipose tissue.

It localises to the peroxisome. The catalysed reaction is an acyl-CoA + acetyl-CoA = a 3-oxoacyl-CoA + CoA. The enzyme catalyses 2 acetyl-CoA = acetoacetyl-CoA + CoA. It carries out the reaction hexanoyl-CoA + acetyl-CoA = 3-oxooctanoyl-CoA + CoA. It catalyses the reaction tetradecanoyl-CoA + acetyl-CoA = 3-oxohexadecanoyl-CoA + CoA. The catalysed reaction is 3-oxohexadecanedioyl-CoA + CoA = tetradecanedioyl-CoA + acetyl-CoA. The enzyme catalyses 3-oxo-(6Z,9Z,12Z,15Z,18Z,21Z)-tetracosahexaenoyl-CoA + CoA = (4Z,7Z,10Z,13Z,16Z,19Z)-docosahexaenoyl-CoA + acetyl-CoA. It participates in lipid metabolism; peroxisomal fatty acid beta-oxidation. Functionally, responsible for the thiolytic cleavage of straight chain 3-keto fatty acyl-CoAs (3-oxoacyl-CoAs). Plays an important role in fatty acid peroxisomal beta-oxidation. Catalyzes the cleavage of short, medium, long, and very long straight chain 3-oxoacyl-CoAs. This Mus musculus (Mouse) protein is 3-ketoacyl-CoA thiolase B, peroxisomal.